The primary structure comprises 485 residues: Probable L-xylulose kinase (485 aa).

This sequence belongs to the FGGY kinase family. Homodimer.

The catalysed reaction is L-xylulose + ATP = L-xylulose 5-phosphate + ADP + H(+). This chain is Probable L-xylulose kinase (lyx), found in Haemophilus influenzae (strain ATCC 51907 / DSM 11121 / KW20 / Rd).